Reading from the N-terminus, the 1230-residue chain is Serine/threonine-protein kinase CST20 (1230 aa).

The segment covering Met1–Ser20 has biased composition (polar residues). Disordered stretches follow at residues Met1–Asn384 and Ser413–Glu470. Composition is skewed to low complexity over residues Asn57–Ser70 and Ser96–Ser125. Basic and acidic residues predominate over residues His150 to Tyr161. Composition is skewed to polar residues over residues Asp175–Ser197, Thr207–Ala224, and Pro237–Asp246. A compositionally biased stretch (low complexity) spans Ser248–Val257. Polar residues-rich tracts occupy residues Ser262 to Ser277 and Asp311 to Gly330. 2 stretches are compositionally biased toward low complexity: residues Asn349–Thr381 and Lys439–Ser468. In terms of domain architecture, CRIB spans Ile475 to Gly488. Disordered stretches follow at residues Phe545 to Asp831 and Leu867 to Ala919. The span at Asn550–Asn561 shows a compositional bias: polar residues. Gly residues predominate over residues Ser570 to Ala581. The segment covering Ile604–Lys613 has biased composition (polar residues). The span at Thr614–Asn628 shows a compositional bias: basic and acidic residues. Over residues Ala629–Gln642 the composition is skewed to polar residues. 3 stretches are compositionally biased toward low complexity: residues Pro670–Asp683, Ser696–Leu710, and Ser736–Ser749. A compositionally biased stretch (polar residues) spans Gln750 to Ala761. Pro residues predominate over residues Ala789–Pro807. Residues Leu811–Ser826 are compositionally biased toward polar residues. A compositionally biased stretch (basic and acidic residues) spans Leu867–Arg876. A compositionally biased stretch (polar residues) spans Gln877–Ser892. Residues Tyr953–Ile1205 enclose the Protein kinase domain. ATP is bound by residues Ile959–Val967 and Lys983. Asp1073 acts as the Proton acceptor in catalysis.

The protein belongs to the protein kinase superfamily. STE Ser/Thr protein kinase family. STE20 subfamily.

It localises to the cytoplasm. Its subcellular location is the nucleus. It catalyses the reaction L-seryl-[protein] + ATP = O-phospho-L-seryl-[protein] + ADP + H(+). The enzyme catalyses L-threonyl-[protein] + ATP = O-phospho-L-threonyl-[protein] + ADP + H(+). In terms of biological role, MAP4K component of the MAPK pathway required for the mating pheromone response, and the regulation of cell polarity and cell cycle. Phosphorylates histone H2B to form H2BS10ph. Required for hyphal formation and virulence. The sequence is that of Serine/threonine-protein kinase CST20 (CST20) from Candida albicans (Yeast).